The sequence spans 97 residues: Aspartyl/glutamyl-tRNA(Asn/Gln) amidotransferase subunit C (97 aa).

The protein belongs to the GatC family. As to quaternary structure, heterotrimer of A, B and C subunits.

It carries out the reaction L-glutamyl-tRNA(Gln) + L-glutamine + ATP + H2O = L-glutaminyl-tRNA(Gln) + L-glutamate + ADP + phosphate + H(+). The enzyme catalyses L-aspartyl-tRNA(Asn) + L-glutamine + ATP + H2O = L-asparaginyl-tRNA(Asn) + L-glutamate + ADP + phosphate + 2 H(+). In terms of biological role, allows the formation of correctly charged Asn-tRNA(Asn) or Gln-tRNA(Gln) through the transamidation of misacylated Asp-tRNA(Asn) or Glu-tRNA(Gln) in organisms which lack either or both of asparaginyl-tRNA or glutaminyl-tRNA synthetases. The reaction takes place in the presence of glutamine and ATP through an activated phospho-Asp-tRNA(Asn) or phospho-Glu-tRNA(Gln). The protein is Aspartyl/glutamyl-tRNA(Asn/Gln) amidotransferase subunit C of Synechococcus sp. (strain CC9311).